Consider the following 700-residue polypeptide: Elongation factor G (700 aa).

The tr-type G domain occupies 10-285 (DRTRNIGIMA…AVIDYLPSPL (276 aa)). Residues 19–26 (AHIDAGKT), 83–87 (DTPGH), and 137–140 (NKMD) each bind GTP.

This sequence belongs to the TRAFAC class translation factor GTPase superfamily. Classic translation factor GTPase family. EF-G/EF-2 subfamily.

Its subcellular location is the cytoplasm. Catalyzes the GTP-dependent ribosomal translocation step during translation elongation. During this step, the ribosome changes from the pre-translocational (PRE) to the post-translocational (POST) state as the newly formed A-site-bound peptidyl-tRNA and P-site-bound deacylated tRNA move to the P and E sites, respectively. Catalyzes the coordinated movement of the two tRNA molecules, the mRNA and conformational changes in the ribosome. This is Elongation factor G from Lacticaseibacillus paracasei (strain ATCC 334 / BCRC 17002 / CCUG 31169 / CIP 107868 / KCTC 3260 / NRRL B-441) (Lactobacillus paracasei).